Consider the following 2313-residue polypeptide: Protein Ycf2 (2313 aa).

1606 to 1613 (GSMETGRS) serves as a coordination point for ATP.

The protein belongs to the Ycf2 family.

The protein localises to the plastid. It localises to the chloroplast stroma. Its function is as follows. Probable ATPase of unknown function. Its presence in a non-photosynthetic plant (Epifagus virginiana) and experiments in tobacco indicate that it has an essential function which is probably not related to photosynthesis. The sequence is that of Protein Ycf2 from Psilotum nudum (Whisk fern).